Consider the following 281-residue polypeptide: Ribosomal RNA small subunit methyltransferase A (281 aa).

S-adenosyl-L-methionine is bound by residues asparagine 36, leucine 38, glycine 63, glutamate 84, aspartate 109, and asparagine 127.

It belongs to the class I-like SAM-binding methyltransferase superfamily. rRNA adenine N(6)-methyltransferase family. RsmA subfamily.

It localises to the cytoplasm. The catalysed reaction is adenosine(1518)/adenosine(1519) in 16S rRNA + 4 S-adenosyl-L-methionine = N(6)-dimethyladenosine(1518)/N(6)-dimethyladenosine(1519) in 16S rRNA + 4 S-adenosyl-L-homocysteine + 4 H(+). In terms of biological role, specifically dimethylates two adjacent adenosines (A1518 and A1519) in the loop of a conserved hairpin near the 3'-end of 16S rRNA in the 30S particle. May play a critical role in biogenesis of 30S subunits. This Borreliella afzelii (strain PKo) (Borrelia afzelii) protein is Ribosomal RNA small subunit methyltransferase A.